The primary structure comprises 346 residues: S-adenosylmethionine:tRNA ribosyltransferase-isomerase (346 aa).

The protein belongs to the QueA family. In terms of assembly, monomer.

Its subcellular location is the cytoplasm. The enzyme catalyses 7-aminomethyl-7-carbaguanosine(34) in tRNA + S-adenosyl-L-methionine = epoxyqueuosine(34) in tRNA + adenine + L-methionine + 2 H(+). It participates in tRNA modification; tRNA-queuosine biosynthesis. Functionally, transfers and isomerizes the ribose moiety from AdoMet to the 7-aminomethyl group of 7-deazaguanine (preQ1-tRNA) to give epoxyqueuosine (oQ-tRNA). The sequence is that of S-adenosylmethionine:tRNA ribosyltransferase-isomerase from Shewanella denitrificans (strain OS217 / ATCC BAA-1090 / DSM 15013).